Consider the following 91-residue polypeptide: Small ribosomal subunit protein bS20 (91 aa).

Basic and acidic residues predominate over residues 1–18; sequence MPLHKSAEKRLRQSERRN. Residues 1–25 form a disordered region; the sequence is MPLHKSAEKRLRQSERRNARNRARK.

This sequence belongs to the bacterial ribosomal protein bS20 family.

Its function is as follows. Binds directly to 16S ribosomal RNA. This chain is Small ribosomal subunit protein bS20, found in Chlorobium luteolum (strain DSM 273 / BCRC 81028 / 2530) (Pelodictyon luteolum).